The chain runs to 1216 residues: DNA-directed RNA polymerase subunit beta' (1216 aa).

Positions 60, 62, 75, and 78 each coordinate Zn(2+). Asp-450, Asp-452, and Asp-454 together coordinate Mg(2+). The Zn(2+) site is built by Cys-819, Cys-893, Cys-900, and Cys-903.

This sequence belongs to the RNA polymerase beta' chain family. As to quaternary structure, the RNAP catalytic core consists of 2 alpha, 1 beta, 1 beta' and 1 omega subunit. When a sigma factor is associated with the core the holoenzyme is formed, which can initiate transcription. The cofactor is Mg(2+). Zn(2+) serves as cofactor.

It catalyses the reaction RNA(n) + a ribonucleoside 5'-triphosphate = RNA(n+1) + diphosphate. Functionally, DNA-dependent RNA polymerase catalyzes the transcription of DNA into RNA using the four ribonucleoside triphosphates as substrates. The polypeptide is DNA-directed RNA polymerase subunit beta' (Streptococcus agalactiae serotype Ia (strain ATCC 27591 / A909 / CDC SS700)).